A 1294-amino-acid polypeptide reads, in one-letter code: Ethylene-insensitive protein 2 (1294 aa).

Residues 1–12 (MEAEIVNVRPQL) are Cytoplasmic-facing. A helical membrane pass occupies residues 13–33 (GFIQRMVPALLPVLLVSVGYI). Residues 34–50 (DPGKWVANIEGGARFGY) lie on the Extracellular side of the membrane. Residues 51 to 71 (DLVAITLLFNFAAILCQYVAA) form a helical membrane-spanning segment. The Cytoplasmic segment spans residues 72-105 (RISVVTGKHLAQICNEEYDKWTCMFLGIQAEFSA). A helical transmembrane segment spans residues 106 to 126 (ILLDLTMVVGVAHALNLLFGV). Position 127 (glutamate 127) is a topological domain, extracellular. Residues 128–148 (LSTGVFLAAMDAFLFPVFASF) form a helical membrane-spanning segment. Over 149-155 (LENGMAN) the chain is Cytoplasmic. Residues 156 to 176 (TVSIYSAGLVLLLYVSGVLLS) form a helical membrane-spanning segment. At 177–194 (QSEIPLSMNGVLTRLNGE) the chain is on the extracellular side. Residues 195-215 (SAFALMGLLGASIVPHNFYIH) traverse the membrane as a helical segment. The Cytoplasmic portion of the chain corresponds to 216–237 (SYFAGESTSSSDVDKSSLCQDH). Residues 238–258 (LFAIFGVFSGLSLVNYVLMNA) traverse the membrane as a helical segment. The Extracellular segment spans residues 259-287 (AANVFHSTGLVVLTFHDALSLMEQVFMSP). The chain crosses the membrane as a helical span at residues 288 to 308 (LIPVVFLMLLFFSSQITALAW). The Cytoplasmic segment spans residues 309–334 (AFGGEVVLHDFLKIEIPAWLHRATIR). Transmembrane regions (helical) follow at residues 335–355 (ILAV…GIYQ) and 356–376 (LLIF…IPLF). Residues 377 to 397 (RIASSRQIMGVHKIPQVGEFL) are Cytoplasmic-facing. The chain crosses the membrane as a helical span at residues 398–418 (ALTTFLGFLGLNVVFVVEMVF). Topologically, residues 419-440 (GSSDWAGGLRWNTVMGTSIQYT) are extracellular. The chain crosses the membrane as a helical span at residues 441–461 (TLLVSSCASLCLILWLAATPL). Residues 462 to 1294 (KSASNRAEAQ…KNVTAYGSLG (833 aa)) are Cytoplasmic-facing. Disordered stretches follow at residues 534–561 (TDQE…SSLK) and 623–662 (ETEE…SLSR). Positions 536-550 (QEIRSSPPEERELDV) are enriched in basic and acidic residues. Phosphoserine is present on residues serine 645, serine 659, and serine 757. Residue threonine 819 is modified to Phosphothreonine. Phosphoserine is present on serine 924. The short motif at 1262–1269 (LKRYKRRL) is the Nuclear localization signal element. The disordered stretch occupies residues 1269-1294 (LSNKPVGMNQDGPGSRKNVTAYGSLG). A Phosphoserine modification is found at serine 1283.

This sequence belongs to the NRAMP (TC 2.A.55) family. As to quaternary structure, interacts (via NLS) with ETR1. Interacts (via C-terminus) with EER5 and the COP9 signalosome subunits CSN3, CSN6A and CSN6B. Interacts with ETP1 and ETP2. Interacts with CTR1. Interacts with all members of the ethylene receptor family, including ETR1, ETR2, ERS1, ERS2 and EIN4. Binds to MRF3/ECIP1. Interacts with several P-body components, such as XRN4/EIN5, PAB2, PAB4 and PAB8. Binds to ENAP1 in the presence of ethylene; this reaction facilitates its association with histone. Post-translationally, phosphorylated by CTR1 on at least 4 sites. Phosphorylation of Ser-645 and Ser-924 is involved in repressing EIN2 signaling. Loss of phosphorylation results in nuclear localization of the C-terminus of EIN2. As to expression, localized to the guard cells after methyl jasmonate treatment.

The protein resides in the endoplasmic reticulum membrane. Its subcellular location is the nucleus. It is found in the cytoplasm. Functionally, central factor in signaling pathways regulated by ethylene (ET) and involved in various processes including development, plant defense, senescence, nucleotide sugar flux, and tropisms. Necessary for ethylene-mediated gene regulation, and for the induction of some genes by ozone. Acts downstream of ET receptors, and upstream of ethylene regulated transcription factors. Required for cytokinin-mediated processes. Seems to be implicated in cross-talk between ET, jasmonate and other pathways. Probably not involved in iron uptake. Has a short half-life and undergoes rapid proteasome-mediated turnover in the absence of ethylene. Required for ethylene-induced EIN3 stabilization via proteasomal degradation of EBF1/EBF2 proteins. Regulates the leaf senescence induced by methyl jasmonate, ethylene and abscisic acid. Required during salt stress to confer resistance. Trafficking signal inducing ethylene response. The nuclear localization is both necessary and sufficient to activate EIN3-mediated transcription and ethylene responses. Involved in ethylene (ET)-mediated signaling pathways by triggering histone acetylation of H3K14 and H3K23 in an ENAP1-dependent manner, thus influencing the expression of ethylene-responsive genes. Necessary and sufficient for 3'-UTR-mediated translational repression of EBF1 and EBF2 mRNAs. Ethylene induces EIN2-CEND to associate with 3' UTRs in cytoplasmic foci and target EBF1/2 mRNAs to cytoplasmic processing-body (P-body). MPK6 regulates the cleavage and nuclear translocation of EIN2-CEND under methyl jasmonate treatment. Required for EIN3 accumulation. The protein is Ethylene-insensitive protein 2 of Arabidopsis thaliana (Mouse-ear cress).